Reading from the N-terminus, the 392-residue chain is S-adenosylmethionine synthase (392 aa).

Histidine 17 lines the ATP pocket. Position 19 (aspartate 19) interacts with Mg(2+). Glutamate 45 contacts K(+). L-methionine contacts are provided by glutamate 58 and glutamine 102. Residues 102–112 are flexible loop; it reads QSADIAQGVDA. ATP contacts are provided by residues 169 to 171, 235 to 236, aspartate 244, 250 to 251, alanine 267, and lysine 271; these read DAK, KF, and RK. Aspartate 244 is a binding site for L-methionine. Position 275 (lysine 275) interacts with L-methionine.

It belongs to the AdoMet synthase family. As to quaternary structure, homotetramer; dimer of dimers. The cofactor is Mg(2+). K(+) serves as cofactor.

Its subcellular location is the cytoplasm. It carries out the reaction L-methionine + ATP + H2O = S-adenosyl-L-methionine + phosphate + diphosphate. It participates in amino-acid biosynthesis; S-adenosyl-L-methionine biosynthesis; S-adenosyl-L-methionine from L-methionine: step 1/1. In terms of biological role, catalyzes the formation of S-adenosylmethionine (AdoMet) from methionine and ATP. The overall synthetic reaction is composed of two sequential steps, AdoMet formation and the subsequent tripolyphosphate hydrolysis which occurs prior to release of AdoMet from the enzyme. The protein is S-adenosylmethionine synthase of Methylobacterium sp. (strain 4-46).